A 102-amino-acid chain; its full sequence is Large ribosomal subunit protein bL21 (102 aa).

The protein belongs to the bacterial ribosomal protein bL21 family. In terms of assembly, part of the 50S ribosomal subunit. Contacts protein L20.

In terms of biological role, this protein binds to 23S rRNA in the presence of protein L20. This Lawsonia intracellularis protein is Large ribosomal subunit protein bL21.